Here is an 83-residue protein sequence, read N- to C-terminus: Conotoxin MiEr92 (83 aa).

The N-terminal stretch at 1–22 (MKLTCVLIVIMLFLTVCPLITA) is a signal peptide. A propeptide spanning residues 23-49 (DHSRDKQEHPAMRLKDRIRYLRRGKLT) is cleaved from the precursor. 3 disulfides stabilise this stretch: Cys52-Cys67, Cys59-Cys72, and Cys66-Cys81.

It belongs to the conotoxin O1 superfamily. As to expression, expressed by the venom duct.

The protein localises to the secreted. The polypeptide is Conotoxin MiEr92 (Conus miles (Soldier cone)).